A 738-amino-acid polypeptide reads, in one-letter code: MTKFQEAVTFKDVAVAFTEEELGLLDSAQRKLYRDVMLENFRNLVSVGHQSFKPDMISQLEREEKLWMKELQTQRGKHSGDRNQNEMATLHKAGLRCFSLGELSCWQIKRHIASKLARSQDSMINIEGKSSQFPKHHDSPCQVGAGESIQASVDDNCLVNHIGDHSSIIENQEFPTGKVPNSWSKIYLNETQNYQRSCKQTQMKNKLCIFAPYVDIFSCISHHHDDNIVHKRDKVHSNSDCGKDTLKVSPLTQRSIHTGQKTYQGNECEEAFNDSSSLELHKQVHLGKKSPACSTHEKDTSYSSGIPVQQSVRTGKKRYWCHECGKGFSQSSNLQTHQRVHTGEKPYTCHECGKSFNQSSHLYAHLPIHTGEKPYRCDSCGKGFSRSTDLNIHCRVHTGEKPYKCEVCGKGFTQRSHLQAHERIHTGEKPYKCGDCGKRFSCSSNLHTHQRVHTEEKPYKCDECGKCFSLSFNLHSHQRVHTGEKPYKCEECGKGFSSASSFQSHQRVHTGEKPFRCNVCGKGFSQSSYFQAHQRVHTGEKPYKCEVCGKRFNWSLNLHNHQRVHTGEKPYKCEECGKGFSQASNLQAHQSVHTGEKPFKCDACQKRFSQASHLQAHQRVHTGEKPYKCDTCGKAFSQRSNLQVHQIIHTGEKPFKCEECGKEFSWSAGLSAHQRVHTGEKPYTCQQCGKGFSQASHFHTHQRVHTGERPYICDVCCKGFSQRSHLIYHQRVHTGGNL.

The region spanning 8–79 (VTFKDVAVAF…ELQTQRGKHS (72 aa)) is the KRAB domain. The C2H2-type 1; degenerate zinc finger occupies 263–285 (YQGNECEEAFNDSSSLELHKQVH). 15 consecutive C2H2-type zinc fingers follow at residues 319-341 (YWCH…QRVH), 347-369 (YTCH…LPIH), 375-397 (YRCD…CRVH), 403-425 (YKCE…ERIH), 431-453 (YKCG…QRVH), 459-481 (YKCD…QRVH), 487-509 (YKCE…QRVH), 515-537 (FRCN…QRVH), 543-565 (YKCE…QRVH), 571-593 (YKCE…QSVH), 599-621 (FKCD…QRVH), 627-649 (YKCD…QIIH), 655-677 (FKCE…QRVH), 683-705 (YTCQ…QRVH), and 711-733 (YICD…QRVH).

Belongs to the krueppel C2H2-type zinc-finger protein family.

Its subcellular location is the nucleus. May be involved in transcriptional regulation. The protein is Zinc finger protein 235 (ZNF235) of Homo sapiens (Human).